Consider the following 299-residue polypeptide: Urease accessory protein UreD (299 aa).

It belongs to the UreD family. As to quaternary structure, ureD, UreF and UreG form a complex that acts as a GTP-hydrolysis-dependent molecular chaperone, activating the urease apoprotein by helping to assemble the nickel containing metallocenter of UreC. The UreE protein probably delivers the nickel.

It localises to the cytoplasm. Functionally, required for maturation of urease via the functional incorporation of the urease nickel metallocenter. The protein is Urease accessory protein UreD of Prochlorococcus marinus (strain MIT 9303).